Consider the following 198-residue polypeptide: 7-methyl-GTP pyrophosphatase (198 aa).

The active-site Proton acceptor is Asp-69.

This sequence belongs to the Maf family. YceF subfamily. Requires a divalent metal cation as cofactor.

Its subcellular location is the cytoplasm. It catalyses the reaction N(7)-methyl-GTP + H2O = N(7)-methyl-GMP + diphosphate + H(+). Its function is as follows. Nucleoside triphosphate pyrophosphatase that hydrolyzes 7-methyl-GTP (m(7)GTP). May have a dual role in cell division arrest and in preventing the incorporation of modified nucleotides into cellular nucleic acids. In Yersinia pseudotuberculosis serotype I (strain IP32953), this protein is 7-methyl-GTP pyrophosphatase.